The chain runs to 453 residues: 3-phosphoshikimate 1-carboxyvinyltransferase (453 aa).

The interval 1-25 is disordered; sequence MSHDSEPQPVTAHPAGPLTGALKPP. Residues K28, S29, and R33 each coordinate 3-phosphoshikimate. K28 contacts phosphoenolpyruvate. Phosphoenolpyruvate is bound by residues G101 and R129. 3-phosphoshikimate-binding residues include S175, Q177, D330, and K357. Q177 contributes to the phosphoenolpyruvate binding site. Catalysis depends on D330, which acts as the Proton acceptor. Phosphoenolpyruvate-binding residues include R361 and R405.

Belongs to the EPSP synthase family. As to quaternary structure, monomer.

The protein localises to the cytoplasm. The enzyme catalyses 3-phosphoshikimate + phosphoenolpyruvate = 5-O-(1-carboxyvinyl)-3-phosphoshikimate + phosphate. The protein operates within metabolic intermediate biosynthesis; chorismate biosynthesis; chorismate from D-erythrose 4-phosphate and phosphoenolpyruvate: step 6/7. Catalyzes the transfer of the enolpyruvyl moiety of phosphoenolpyruvate (PEP) to the 5-hydroxyl of shikimate-3-phosphate (S3P) to produce enolpyruvyl shikimate-3-phosphate and inorganic phosphate. This Methylorubrum populi (strain ATCC BAA-705 / NCIMB 13946 / BJ001) (Methylobacterium populi) protein is 3-phosphoshikimate 1-carboxyvinyltransferase.